The following is a 233-amino-acid chain: uncharacterized protein (233 aa).

A disordered region spans residues 190-233; the sequence is LNTSLSEDDTESIVETDYSEEEKESISETESSSDDESYSLYDSF. Positions 195–212 are enriched in acidic residues; it reads SEDDTESIVETDYSEEEK.

Belongs to the asfivirus DP238L family.

This is an uncharacterized protein from Ornithodoros (relapsing fever ticks).